The chain runs to 211 residues: Tudor-interacting repair regulator protein (211 aa).

Residues lysine 10 and lysine 151 each participate in a glycyl lysine isopeptide (Lys-Gly) (interchain with G-Cter in ubiquitin) cross-link. The tract at residues threonine 118–lysine 205 is interaction with PXN.

The protein belongs to the Nudix hydrolase family. TIRR subfamily. In terms of assembly, homodimer. Interacts with TP53BP1 (via the Tudor-like domain); interaction is abolished following DNA damage and TP53BP1 phosphorylation by ATM. Interacts (via the cytoplasmic part) with SDC4. Interacts with TGFB1I1 and PXN.

It is found in the nucleus. In terms of biological role, key regulator of TP53BP1 required to stabilize TP53BP1 and regulate its recruitment to chromatin. In absence of DNA damage, interacts with the tandem Tudor-like domain of TP53BP1, masking the region that binds histone H4 dimethylated at 'Lys-20' (H4K20me2), thereby preventing TP53BP1 recruitment to chromatin and maintaining TP53BP1 localization to the nucleus. Following DNA damage, ATM-induced phosphorylation of TP53BP1 and subsequent recruitment of RIF1 leads to dissociate NUDT16L1/TIRR from TP53BP1, unmasking the tandem Tudor-like domain and allowing recruitment of TP53BP1 to DNA double strand breaks (DSBs). Binds U8 snoRNA. The polypeptide is Tudor-interacting repair regulator protein (Mus musculus (Mouse)).